A 269-amino-acid polypeptide reads, in one-letter code: Integral membrane protein 2C (269 aa).

T39 is modified (phosphothreonine). A helical; Signal-anchor for type II membrane protein membrane pass occupies residues 57–77 (VGGVCYLSMGMVVLLMGLVFA). In terms of domain architecture, BRICHOS spans 138–232 (FGGGDPADII…LCNGKDTYRL (95 aa)). C165 and C224 are joined by a disulfide. A glycan (N-linked (GlcNAc...) asparagine) is linked at N171.

It belongs to the ITM2 family. Interacts with BACE1. Interacts with APP. Interacts with STMN2. In terms of processing, type I membrane-bound, as well as soluble, furin has a pre-eminent role in ITM2C proteolytic processing. PCSK7 and PCSK5 may also be involved although to a lesser extent. The soluble form of PCSK7 is incapable of processing ITM2C. Fails to undergo shedding by ADAM10 and intramembrane cleavage by SPPL2B.

The protein localises to the lysosome membrane. Its subcellular location is the cell membrane. In terms of biological role, negative regulator of amyloid-beta peptide production. May inhibit the processing of APP by blocking its access to alpha- and beta-secretase. Binding to the beta-secretase-cleaved APP C-terminal fragment is negligible, suggesting that ITM2C is a poor gamma-secretase cleavage inhibitor. May play a role in TNF-induced cell death and neuronal differentiation. The sequence is that of Integral membrane protein 2C (ITM2C) from Sus scrofa (Pig).